A 273-amino-acid chain; its full sequence is Type IV secretion system protein PtlF (273 aa).

The signal sequence occupies residues 1 to 20 (MMAARMMAAGLAATALSAHA).

This sequence belongs to the TrbG/VirB9 family. As to quaternary structure, forms a complex with PtlI.

Its subcellular location is the cell outer membrane. Its function is as follows. Component of the type IV secretion system ptl required for secretion of assembled pertussis toxin (PTX) through the outer membrane. The chain is Type IV secretion system protein PtlF (ptlF) from Bordetella pertussis (strain Tohama I / ATCC BAA-589 / NCTC 13251).